A 309-amino-acid chain; its full sequence is Homoserine O-succinyltransferase (309 aa).

The Acyl-thioester intermediate role is filled by Cys-142. The substrate site is built by Lys-163 and Ser-192. His-235 functions as the Proton acceptor in the catalytic mechanism. Glu-237 is an active-site residue. Residue Arg-249 participates in substrate binding.

It belongs to the MetA family.

It is found in the cytoplasm. The enzyme catalyses L-homoserine + succinyl-CoA = O-succinyl-L-homoserine + CoA. It participates in amino-acid biosynthesis; L-methionine biosynthesis via de novo pathway; O-succinyl-L-homoserine from L-homoserine: step 1/1. Functionally, transfers a succinyl group from succinyl-CoA to L-homoserine, forming succinyl-L-homoserine. The protein is Homoserine O-succinyltransferase of Enterobacter sp. (strain 638).